The sequence spans 133 residues: Profilin-4 (133 aa).

A disulfide bridge connects residues cysteine 13 and cysteine 117. The Involved in PIP2 interaction motif lies at 83 to 99 (AVIRGKKGSGGITIKKT). At threonine 113 the chain carries Phosphothreonine.

The protein belongs to the profilin family. In terms of assembly, occurs in many kinds of cells as a complex with monomeric actin in a 1:1 ratio. Post-translationally, phosphorylated by MAP kinases.

Its subcellular location is the cytoplasm. The protein resides in the cytoskeleton. Functionally, binds to actin and affects the structure of the cytoskeleton. At high concentrations, profilin prevents the polymerization of actin, whereas it enhances it at low concentrations. This is Profilin-4 from Corylus avellana (European hazel).